Reading from the N-terminus, the 762-residue chain is 5-methyltetrahydropteroyltriglutamate--homocysteine methyltransferase (762 aa).

5-methyltetrahydropteroyltri-L-glutamate-binding positions include 18-21 (REWK) and K112. L-homocysteine is bound by residues 435-437 (IGS) and E488. L-methionine is bound by residues 435–437 (IGS) and E488. 5-methyltetrahydropteroyltri-L-glutamate-binding positions include 519 to 520 (RC) and W565. Position 603 (D603) interacts with L-homocysteine. D603 is a binding site for L-methionine. E609 serves as a coordination point for 5-methyltetrahydropteroyltri-L-glutamate. Zn(2+) contacts are provided by H645, C647, and E669. The Proton donor role is filled by H698. C730 serves as a coordination point for Zn(2+).

This sequence belongs to the vitamin-B12 independent methionine synthase family. Requires Zn(2+) as cofactor.

It catalyses the reaction 5-methyltetrahydropteroyltri-L-glutamate + L-homocysteine = tetrahydropteroyltri-L-glutamate + L-methionine. It functions in the pathway amino-acid biosynthesis; L-methionine biosynthesis via de novo pathway; L-methionine from L-homocysteine (MetE route): step 1/1. Its function is as follows. Catalyzes the transfer of a methyl group from 5-methyltetrahydrofolate to homocysteine resulting in methionine formation. The chain is 5-methyltetrahydropteroyltriglutamate--homocysteine methyltransferase from Bacillus licheniformis (strain ATCC 14580 / DSM 13 / JCM 2505 / CCUG 7422 / NBRC 12200 / NCIMB 9375 / NCTC 10341 / NRRL NRS-1264 / Gibson 46).